A 950-amino-acid chain; its full sequence is MKLSELFNPNEFAARHLSFGDEAALLAAVDEKSMDEFVGNTVPQSIRMPSELDLPEALTEADALAKLKGIASKNMINKSYIGLGYYPTRVPNVILRNVLENPGWYTAYTPYQAEIAQGRLEALLNFQQVCIDLTGFPVAGASLLDEATAAAEAMAMAHRVGKVKSERFFVDERVYPQTLDVMKTRAKYFGFELVVGDFAQADEGEYFGALFQYVGKDGDVQDLQDVIGRLKAKGTIVAVAADIMSLVLLKSPAELGADIALGNTQRFGVPMGFGGPHAAYFAFKDEFKRSAPGRIIGVSKDASGKPALRMALSTREQHIRREKATSNICTAQALLANLAGMYAVYHGPKGVKRIADRIHALASAFADALVSDGLNVVHKVFFDTVTVDFGNKEKADQVFAAALESGYNLRRVNDTQVAAAFHETSACEDLVDLYRAFTGKDTFAFADDVKGRLNAELLRQDDILQHPVFNSYHTEHEMLRYLKKLEDRDLAMNRSMISLGSCTMKLNATAEMLPITWAEFSDIHPYAPEAQTAGYRELLADMENSLKAITGFDAISLQPNSGAQGEYTGMLSIRRYQEAQGEAHRNICLIPKSAHGTNPATAAMLGLKVVVVDTDEHGNVNIDDLKAKAEQHRDALSAIMITYPSTHGVYEEGIRDICRIIHENGGQVYMDGANLNAQIGIMQPAEVGADVLHMNLHKTFCIPHGGGGPGMGPIGLKAHLAPFAPGHTLTDTHSASAGQTAVAAAAYGSASILPITWMYLTMMGKQGMEQATRWALLNANYVAKRLSEDYPILYTGKNGRVAHECIVDLRPLKAESGITETDIAKRLMDYGFHAPTVSFPVAGTLMIEPTESESKAELDRFIATLKSIRREVQKVIDGEWPKDDNPLVNAPHTAADITGNWAHPYSREEAVFPLPFVREHKFWPFVNRVDDVYGDRNLVCSCPPMENYED.

N6-(pyridoxal phosphate)lysine is present on Lys698.

It belongs to the GcvP family. The glycine cleavage system is composed of four proteins: P, T, L and H. Pyridoxal 5'-phosphate serves as cofactor.

The enzyme catalyses N(6)-[(R)-lipoyl]-L-lysyl-[glycine-cleavage complex H protein] + glycine + H(+) = N(6)-[(R)-S(8)-aminomethyldihydrolipoyl]-L-lysyl-[glycine-cleavage complex H protein] + CO2. Functionally, the glycine cleavage system catalyzes the degradation of glycine. The P protein binds the alpha-amino group of glycine through its pyridoxal phosphate cofactor; CO(2) is released and the remaining methylamine moiety is then transferred to the lipoamide cofactor of the H protein. In Neisseria meningitidis serogroup A / serotype 4A (strain DSM 15465 / Z2491), this protein is Glycine dehydrogenase (decarboxylating).